Reading from the N-terminus, the 113-residue chain is MKITLSKRIGLLAFLLPCALALSTTVHAETNKLVIESGDSAQSRQHAAMEKEQWNDTRNLRRKVNKRTEKEWDKADAAFDNRDKCEQSANINAYWEPNTLRCLDRRTGRVITP.

Positions 1 to 28 (MKITLSKRIGLLAFLLPCALALSTTVHA) are cleaved as a signal peptide.

The protein belongs to the UPF0482 family.

This chain is UPF0482 protein YnfB, found in Shigella dysenteriae serotype 1 (strain Sd197).